We begin with the raw amino-acid sequence, 169 residues long: Large ribosomal subunit protein uL10 (169 aa).

It belongs to the universal ribosomal protein uL10 family. As to quaternary structure, part of the ribosomal stalk of the 50S ribosomal subunit. The N-terminus interacts with L11 and the large rRNA to form the base of the stalk. The C-terminus forms an elongated spine to which L12 dimers bind in a sequential fashion forming a multimeric L10(L12)X complex.

In terms of biological role, forms part of the ribosomal stalk, playing a central role in the interaction of the ribosome with GTP-bound translation factors. The sequence is that of Large ribosomal subunit protein uL10 from Rickettsia africae (strain ESF-5).